A 1554-amino-acid chain; its full sequence is Lysine-specific demethylase 5C (1554 aa).

The JmjN domain maps to 14 to 55 (CPVFEPSWAEFRDPLGYIAKIRPIAEKSGICKIRPPADWQPP). The ARID domain maps to 79–169 (TRVKLNYLDQ…IVYPYEMYQS (91 aa)). The segment covering 197 to 207 (LRQSVQPSKFN) has biased composition (polar residues). The segment at 197–227 (LRQSVQPSKFNSYGRRAKRLQPDPEPTEEDI) is disordered. Glycyl lysine isopeptide (Lys-Gly) (interchain with G-Cter in SUMO2) cross-links involve residues lysine 205, lysine 229, lysine 244, and lysine 274. The disordered stretch occupies residues 284–303 (ESTSPKTFLEGKEELSHSPE). Residue serine 287 is modified to Phosphoserine. Lysine 295 is covalently cross-linked (Glycyl lysine isopeptide (Lys-Gly) (interchain with G-Cter in SUMO2)). Phosphoserine is present on residues serine 301 and serine 317. A PHD-type 1 zinc finger spans residues 326-372 (VCRMCSRGDEDDKLLLCDGCDDNYHIFCLLPPLPEIPKGVWRCPKCV). Positions 468 to 634 (EYATSGWNLN…AGRQCIEHYR (167 aa)) constitute a JmjC domain. The Fe cation site is built by histidine 514, aspartate 517, and histidine 602. Serine 893 and serine 897 each carry phosphoserine. Residue lysine 1127 forms a Glycyl lysine isopeptide (Lys-Gly) (interchain with G-Cter in SUMO2) linkage. The PHD-type 2 zinc-finger motif lies at 1187-1248 (ICVCGQVPAG…DTKFLCPLCM (62 aa)). Disordered regions lie at residues 1319 to 1364 (SKPE…EGSG) and 1437 to 1535 (AERH…APFS). Position 1353 is a phosphoserine (serine 1353). Residues 1442-1457 (SRTRGRALERRRRRKV) are compositionally biased toward basic residues. The segment covering 1458-1475 (DRGGEPDDPAREELEPKR) has biased composition (basic and acidic residues). A compositionally biased stretch (acidic residues) spans 1482–1497 (EAEEVQEEEELEEETG).

Belongs to the JARID1 histone demethylase family. In terms of assembly, part of two distinct complexes, one containing E2F6, and the other containing REST. Interacts with ZMYND8. Requires Fe(2+) as cofactor.

It is found in the nucleus. The enzyme catalyses N(6),N(6),N(6)-trimethyl-L-lysyl(4)-[histone H3] + 3 2-oxoglutarate + 3 O2 = L-lysyl(4)-[histone H3] + 3 formaldehyde + 3 succinate + 3 CO2. In terms of biological role, histone demethylase that specifically demethylates 'Lys-4' of histone H3, thereby playing a central role in histone code. Does not demethylate histone H3 'Lys-9', H3 'Lys-27', H3 'Lys-36', H3 'Lys-79' or H4 'Lys-20'. Demethylates trimethylated and dimethylated but not monomethylated H3 'Lys-4'. Participates in transcriptional repression of neuronal genes by recruiting histone deacetylases and REST at neuron-restrictive silencer elements. Represses the CLOCK-BMAL1 heterodimer-mediated transcriptional activation of the core clock component PER2. In Mus musculus (Mouse), this protein is Lysine-specific demethylase 5C (Kdm5c).